Here is a 494-residue protein sequence, read N- to C-terminus: Probable cytosol aminopeptidase (494 aa).

Residues lysine 260 and aspartate 265 each coordinate Mn(2+). The active site involves lysine 272. 3 residues coordinate Mn(2+): aspartate 283, aspartate 342, and glutamate 344. Arginine 346 is a catalytic residue.

Belongs to the peptidase M17 family. Mn(2+) serves as cofactor.

It localises to the cytoplasm. The enzyme catalyses Release of an N-terminal amino acid, Xaa-|-Yaa-, in which Xaa is preferably Leu, but may be other amino acids including Pro although not Arg or Lys, and Yaa may be Pro. Amino acid amides and methyl esters are also readily hydrolyzed, but rates on arylamides are exceedingly low.. The catalysed reaction is Release of an N-terminal amino acid, preferentially leucine, but not glutamic or aspartic acids.. In terms of biological role, presumably involved in the processing and regular turnover of intracellular proteins. Catalyzes the removal of unsubstituted N-terminal amino acids from various peptides. This Bacillus cereus (strain AH187) protein is Probable cytosol aminopeptidase.